A 661-amino-acid chain; its full sequence is UvrABC system protein B (661 aa).

Positions 31–186 (DNIEGGEKAQ…LLNALVDIQF (156 aa)) constitute a Helicase ATP-binding domain. 44–51 (GATGTGKT) contacts ATP. The Beta-hairpin signature appears at 97–120 (YYDYYQPEAYVPSSDTYIEKDSSV). Residues 435–601 (QMDDLLGEIN…TIKKEIRDLI (167 aa)) enclose the Helicase C-terminal domain. The 36-residue stretch at 626–661 (KAMIKKLEGQMQEAAEVLDFELAAQIRDMVIELKNM) folds into the UVR domain.

It belongs to the UvrB family. Forms a heterotetramer with UvrA during the search for lesions. Interacts with UvrC in an incision complex.

It localises to the cytoplasm. Its function is as follows. The UvrABC repair system catalyzes the recognition and processing of DNA lesions. A damage recognition complex composed of 2 UvrA and 2 UvrB subunits scans DNA for abnormalities. Upon binding of the UvrA(2)B(2) complex to a putative damaged site, the DNA wraps around one UvrB monomer. DNA wrap is dependent on ATP binding by UvrB and probably causes local melting of the DNA helix, facilitating insertion of UvrB beta-hairpin between the DNA strands. Then UvrB probes one DNA strand for the presence of a lesion. If a lesion is found the UvrA subunits dissociate and the UvrB-DNA preincision complex is formed. This complex is subsequently bound by UvrC and the second UvrB is released. If no lesion is found, the DNA wraps around the other UvrB subunit that will check the other stand for damage. The polypeptide is UvrABC system protein B (Streptococcus suis (strain 98HAH33)).